A 496-amino-acid chain; its full sequence is Glutamate--tRNA ligase (496 aa).

Residues 11–21 (PSPTGLLHIGN) carry the 'HIGH' region motif. The short motif at 255-259 (KLSKR) is the 'KMSKS' region element. ATP is bound at residue Lys-258.

This sequence belongs to the class-I aminoacyl-tRNA synthetase family. Glutamate--tRNA ligase type 1 subfamily. Monomer.

The protein resides in the cytoplasm. The catalysed reaction is tRNA(Glu) + L-glutamate + ATP = L-glutamyl-tRNA(Glu) + AMP + diphosphate. In terms of biological role, catalyzes the attachment of glutamate to tRNA(Glu) in a two-step reaction: glutamate is first activated by ATP to form Glu-AMP and then transferred to the acceptor end of tRNA(Glu). This chain is Glutamate--tRNA ligase, found in Streptococcus pyogenes serotype M49 (strain NZ131).